A 904-amino-acid chain; its full sequence is DNA mismatch repair protein MutS (904 aa).

655-662 provides a ligand contact to ATP; it reads GPNMGGKS.

Belongs to the DNA mismatch repair MutS family.

In terms of biological role, this protein is involved in the repair of mismatches in DNA. It is possible that it carries out the mismatch recognition step. This protein has a weak ATPase activity. This Rhizorhabdus wittichii (strain DSM 6014 / CCUG 31198 / JCM 15750 / NBRC 105917 / EY 4224 / RW1) (Sphingomonas wittichii) protein is DNA mismatch repair protein MutS.